A 609-amino-acid polypeptide reads, in one-letter code: Proteasome-associated ATPase (609 aa).

The segment at 1-22 (MGESERSEAFNPPREAGMSSGD) is disordered. A coiled-coil region spans residues 20–96 (SGDIAELEQL…LREEVDRLGQ (77 aa)). An ATP-binding site is contributed by 296–301 (GCGKTL). The tract at residues 608 to 609 (YL) is docks into pockets in the proteasome alpha-ring.

The protein belongs to the AAA ATPase family. As to quaternary structure, homohexamer. Assembles into a hexameric ring structure that caps the 20S proteasome core. Strongly interacts with the prokaryotic ubiquitin-like protein Pup through a hydrophobic interface; the interacting region of ARC lies in its N-terminal coiled-coil domain. There is one Pup binding site per ARC hexamer ring. Upon ATP-binding, the C-terminus of ARC interacts with the alpha-rings of the proteasome core, possibly by binding to the intersubunit pockets.

Its pathway is protein degradation; proteasomal Pup-dependent pathway. ATPase which is responsible for recognizing, binding, unfolding and translocation of pupylated proteins into the bacterial 20S proteasome core particle. May be essential for opening the gate of the 20S proteasome via an interaction with its C-terminus, thereby allowing substrate entry and access to the site of proteolysis. Thus, the C-termini of the proteasomal ATPase may function like a 'key in a lock' to induce gate opening and therefore regulate proteolysis. This Mycobacterium leprae (strain Br4923) protein is Proteasome-associated ATPase.